The following is a 65-amino-acid chain: Putative primary metabolism protein prl65 (65 aa).

Residues 1–25 (MTKYSKGNKVEYHPIGGPSGTSTST) form a disordered region.

May play a role in primary metabolism. The protein is Putative primary metabolism protein prl65 of Schizosaccharomyces pombe (strain 972 / ATCC 24843) (Fission yeast).